A 63-amino-acid polypeptide reads, in one-letter code: uncharacterized protein (63 aa).

This is an uncharacterized protein from Haemophilus influenzae (strain ATCC 51907 / DSM 11121 / KW20 / Rd).